Consider the following 1147-residue polypeptide: Myosin heavy chain IB (1147 aa).

The region spanning Arg9–Asp677 is the Myosin motor domain. Gly103–Thr110 is a binding site for ATP. The residue at position 315 (Ser315) is a Phosphoserine. The actin-binding stretch occupies residues Cys551 to Asp573. In terms of domain architecture, TH1 spans Lys715–Thr900. Disordered regions lie at residues Gly901–Pro954 and Ala969–Ala1089. Composition is skewed to gly residues over residues Ser916–Tyr951 and Gly975–Arg1079. In terms of domain architecture, SH3 spans Pro1090 to Ile1147.

The protein belongs to the TRAFAC class myosin-kinesin ATPase superfamily. Myosin family. In terms of assembly, myosin I heavy chain is single-headed. Dimer of a heavy and a light chain. Inability to self-assemble into filaments.

Its function is as follows. Myosin is a protein that binds to F-actin and has ATPase activity that is activated by F-actin. The protein is Myosin heavy chain IB (MIB) of Acanthamoeba castellanii (Amoeba).